The sequence spans 266 residues: Eukaryotic translation initiation factor 3 subunit J (266 aa).

Disordered regions lie at residues 1 to 142 and 215 to 243; these read MAPS…VSDS and MSNEKMREERAADKGNKKSKAAKTKVSLV. The segment covering 26–44 has biased composition (acidic residues); the sequence is DEEEEDVLDSWDAAEDSEV. The stretch at 40 to 99 forms a coiled coil; sequence EDSEVEREKAAKAAEAKAKAEAEAAAKKKSKAQRIQEHKEERKKREEEDSSSESEEDEAE. Basic and acidic residues-rich tracts occupy residues 45-65 and 73-86; these read EREKAAKAAEAKAKAEAEAAA and RIQEHKEERKKREE. Over residues 87 to 97 the composition is skewed to acidic residues; it reads EDSSSESEEDE. Basic and acidic residues-rich tracts occupy residues 98-118 and 218-230; these read AERRARLRRTEKDSDLKHAED and EKMREERAADKGN.

It belongs to the eIF-3 subunit J family. As to quaternary structure, component of the eukaryotic translation initiation factor 3 (eIF-3) complex.

The protein resides in the cytoplasm. In terms of biological role, component of the eukaryotic translation initiation factor 3 (eIF-3) complex, which is involved in protein synthesis of a specialized repertoire of mRNAs and, together with other initiation factors, stimulates binding of mRNA and methionyl-tRNAi to the 40S ribosome. The eIF-3 complex specifically targets and initiates translation of a subset of mRNAs involved in cell proliferation. This chain is Eukaryotic translation initiation factor 3 subunit J (hcr1), found in Aspergillus terreus (strain NIH 2624 / FGSC A1156).